A 143-amino-acid chain; its full sequence is Large ribosomal subunit protein uL11 (143 aa).

The protein belongs to the universal ribosomal protein uL11 family. Part of the ribosomal stalk of the 50S ribosomal subunit. Interacts with L10 and the large rRNA to form the base of the stalk. L10 forms an elongated spine to which L12 dimers bind in a sequential fashion forming a multimeric L10(L12)X complex. Post-translationally, one or more lysine residues are methylated.

Functionally, forms part of the ribosomal stalk which helps the ribosome interact with GTP-bound translation factors. The protein is Large ribosomal subunit protein uL11 of Phenylobacterium zucineum (strain HLK1).